We begin with the raw amino-acid sequence, 78 residues long: COP9 signalosome complex subunit 5b (78 aa).

This sequence belongs to the peptidase M67A family. CSN5 subfamily. Component of the CSN complex, probably composed of CSN1, CSN2, CSN3, CSN4, CSN5 (CSN5A or CSN5B), CSN6 (CSN6A or CSN6B), CSN7 and CSN8. It depends on a divalent metal cation as a cofactor.

It localises to the cytoplasm. It is found in the nucleus. Functionally, probable protease subunit of the COP9 signalosome complex (CSN), a complex involved in various cellular and developmental processes such as photomorphogenesis and auxin and jasmonate responses. The CSN complex is an essential regulator of the ubiquitin (Ubl) conjugation pathway by mediating the deneddylation of the cullin subunits of the SCF-type E3 ligase complexes, leading to decrease the Ubl ligase activity of SCF. In the complex, it probably acts as the catalytic center that mediates the cleavage of Nedd8 from cullins. It however has no metalloprotease activity by itself and requires the other subunits of the CSN complex. The CSN complex is involved in repression of photomorphogenesis in darkness by regulating the activity of COP1-containing Ubl ligase complexes. The chain is COP9 signalosome complex subunit 5b (CSN5B) from Brassica oleracea (Wild cabbage).